The following is a 430-amino-acid chain: Enolase (430 aa).

Glutamine 163 lines the (2R)-2-phosphoglycerate pocket. Glutamate 205 (proton donor) is an active-site residue. Mg(2+) contacts are provided by aspartate 242, glutamate 285, and aspartate 312. (2R)-2-phosphoglycerate contacts are provided by lysine 337, arginine 366, serine 367, and lysine 388. The active-site Proton acceptor is the lysine 337.

Belongs to the enolase family. Mg(2+) is required as a cofactor.

It localises to the cytoplasm. The protein resides in the secreted. Its subcellular location is the cell surface. The enzyme catalyses (2R)-2-phosphoglycerate = phosphoenolpyruvate + H2O. Its pathway is carbohydrate degradation; glycolysis; pyruvate from D-glyceraldehyde 3-phosphate: step 4/5. Its function is as follows. Catalyzes the reversible conversion of 2-phosphoglycerate (2-PG) into phosphoenolpyruvate (PEP). It is essential for the degradation of carbohydrates via glycolysis. In Rubrobacter xylanophilus (strain DSM 9941 / JCM 11954 / NBRC 16129 / PRD-1), this protein is Enolase.